The sequence spans 51 residues: Protein 1.4 (51 aa).

A signal peptide spans 1 to 23 (MFKKVGKFLAALAAILTLAYILA). The helical transmembrane segment at 28-48 (VALVVVGACYLAAVCACVWSI) threads the bilayer.

The protein resides in the host membrane. In Escherichia coli (Bacteriophage T7), this protein is Protein 1.4.